The following is a 423-amino-acid chain: Histidine--tRNA ligase 2 (423 aa).

This sequence belongs to the class-II aminoacyl-tRNA synthetase family. As to quaternary structure, homodimer.

The protein localises to the cytoplasm. The catalysed reaction is tRNA(His) + L-histidine + ATP = L-histidyl-tRNA(His) + AMP + diphosphate + H(+). This Bacillus anthracis protein is Histidine--tRNA ligase 2.